Consider the following 344-residue polypeptide: uncharacterized protein (344 aa).

Positions 1–20 (MEIRIMLFILMMMVMPVSYA) are cleaved as a signal peptide.

It belongs to the fimbrial protein family.

Functionally, part of the yehABCD fimbrial operon. Could contribute to adhesion to various surfaces in specific environmental niches. This is an uncharacterized protein from Escherichia coli (strain K12).